Consider the following 309-residue polypeptide: Sulfate adenylyltransferase subunit 2 (309 aa).

The protein belongs to the PAPS reductase family. CysD subfamily. Heterodimer composed of CysD, the smaller subunit, and CysN.

The enzyme catalyses sulfate + ATP + H(+) = adenosine 5'-phosphosulfate + diphosphate. It participates in sulfur metabolism; hydrogen sulfide biosynthesis; sulfite from sulfate: step 1/3. Functionally, with CysN forms the ATP sulfurylase (ATPS) that catalyzes the adenylation of sulfate producing adenosine 5'-phosphosulfate (APS) and diphosphate, the first enzymatic step in sulfur assimilation pathway. APS synthesis involves the formation of a high-energy phosphoric-sulfuric acid anhydride bond driven by GTP hydrolysis by CysN coupled to ATP hydrolysis by CysD. This Mycobacterium sp. (strain JLS) protein is Sulfate adenylyltransferase subunit 2.